The sequence spans 1151 residues: Calcium-activated potassium channel subunit alpha-1 (1151 aa).

The disordered stretch occupies residues 1–36; that stretch reads MSSNIHANHLSLDASSSSSSSSSSSSSSSSSSSVHE. Residues 1-59 are Extracellular-facing; it reads MSSNIHANHLSLDASSSSSSSSSSSSSSSSSSSVHEPKMDALIIPVTMEVPCDSRGQRM. Positions 15–33 are enriched in low complexity; sequence SSSSSSSSSSSSSSSSSSS. The chain crosses the membrane as a helical span at residues 60 to 80; it reads WWAFLASSMVTFFGGLFIILL. The Cytoplasmic portion of the chain corresponds to 81-151; it reads WRTLKYLWTV…MISAQTLTGR (71 aa). S-palmitoyl cysteine attachment occurs at residues Cys91, Cys92, and Cys94. Residues 152-172 form a helical membrane-spanning segment; it reads VLVVLVFALSIGALVIYFIDS. Residues 173–187 lie on the Extracellular side of the membrane; the sequence is SNPIESCQNFYKDFT. The helical transmembrane segment at 188–208 threads the bilayer; the sequence is LQIDMAFNVFFLLYFGLRFIA. Over 209–212 the chain is Cytoplasmic; it reads ANDK. A helical transmembrane segment spans residues 213–233; it reads LWFWLEVNSVVDFFTVPPVFV. Over 234-237 the chain is Extracellular; sequence SVYL. The chain crosses the membrane as a helical; Voltage-sensor span at residues 238–258; the sequence is NRSWLGLRFLRALRLIQFSEI. Residues 259–273 are Cytoplasmic-facing; sequence LQFLNILKTSNSIKL. Residues 274–294 form a helical membrane-spanning segment; the sequence is VNLLSIFISTWLTAAGFIHLV. The Extracellular portion of the chain corresponds to 295-308; sequence ENSGDPWENFQNNQ. The segment at residues 309 to 331 is an intramembrane region (pore-forming); the sequence is ALTYWECVYLLMVTMSTVGYGDV. The Selectivity for potassium signature appears at 325 to 328; that stretch reads TVGY. Topologically, residues 332–340 are extracellular; sequence YAKTTLGRL. Residues 341–361 traverse the membrane as a helical segment; sequence FMVFFILGGLAMFASYVPEII. Residues 362-1151 are Cytoplasmic-facing; it reads ELIGNRKKYG…KQKYVQEERL (790 aa). In terms of domain architecture, RCK N-terminal 1 spans 380–522; it reads RKHIVVCGHI…WNWKEGDDAI (143 aa). Mg(2+) contacts are provided by Glu412, Gln435, and Glu437. The interval 529-549 is segment S7; sequence LGFIAQSCLAQGLSTMLANLF. The segment at 586–606 is segment S8; the sequence is LSFPTVCELCFVKLKLLMIAI. The tract at residues 650–654 is heme-binding motif; that stretch reads CKACH. The disordered stretch occupies residues 674–702; it reads EQPSTLSPKKKQRNGGMRNSPNSSPKLMR. Thr678 is subject to Phosphothreonine. Phosphoserine is present on residues Ser680, Ser693, and Ser697. The tract at residues 752-772 is segment S9; that stretch reads VLSGHVVVCIFGDVSSALIGL. Positions 754-898 constitute an RCK N-terminal 2 domain; that stretch reads SGHVVVCIFG…MDRSSPDNSP (145 aa). A Phosphothreonine modification is found at Thr885. Phosphoserine is present on residues Ser893 and Ser897. A Calcium bowl motif is present at residues 918-940; the sequence is TELVNDTNVQFLDQDDDDDPDTE. The Ca(2+) site is built by Gln927, Asp930, Asp933, and Asp935. Residues 947–967 are segment S10; that stretch reads FACGTAFAVSVLDSLMSATYF. Low complexity predominate over residues 1101 to 1126; it reads RASLSHSSHSSQSSSKKSSSVHSIPS. The disordered stretch occupies residues 1101–1151; sequence RASLSHSSHSSQSSSKKSSSVHSIPSTANRQNRPKSRESRDKQKYVQEERL. Residues 1135–1151 show a composition bias toward basic and acidic residues; sequence KSRESRDKQKYVQEERL. A phosphoserine mark is found at Ser1136 and Ser1139.

This sequence belongs to the potassium channel family. Calcium-activated (TC 1.A.1.3) subfamily. KCa1.1/KCNMA1 sub-subfamily. Homotetramer; which constitutes the calcium-activated potassium channel. Interacts with beta subunits KCNMB1, KCNMB2, KCNMB3 and KCNMB4. Interacts with gamma subunits LRRC26, LRRC38, LRRC52 and LRRC55. Beta and gamma subunits are accessory, and modulate its activity. Interacts with RAB11B. Post-translationally, phosphorylated. Phosphorylation by kinases such as PKA and/or PKG. In smooth muscles, phosphorylation affects its activity. In terms of processing, palmitoylation by ZDHHC22 and ZDHHC23 within the intracellular linker between the S0 and S1 transmembrane domains regulates localization to the plasma membrane. Depalmitoylated by LYPLA1 and LYPLAL1, leading to retard exit from the trans-Golgi network.

The protein resides in the cell membrane. It catalyses the reaction K(+)(in) = K(+)(out). Its activity is regulated as follows. Ethanol and carbon monoxide-bound heme increase channel activation. Heme inhibits channel activation. Potassium channel activated by both membrane depolarization or increase in cytosolic Ca(2+) that mediates export of K(+). It is also activated by the concentration of cytosolic Mg(2+). Its activation dampens the excitatory events that elevate the cytosolic Ca(2+) concentration and/or depolarize the cell membrane. It therefore contributes to repolarization of the membrane potential. Plays a key role in controlling excitability in a number of systems, such as regulation of the contraction of smooth muscle, the tuning of hair cells in the cochlea, regulation of transmitter release, and innate immunity. In smooth muscles, its activation by high level of Ca(2+), caused by ryanodine receptors in the sarcoplasmic reticulum, regulates the membrane potential. In cochlea cells, its number and kinetic properties partly determine the characteristic frequency of each hair cell and thereby helps to establish a tonotopic map. Kinetics of KCNMA1 channels are determined by alternative splicing, phosphorylation status and its combination with modulating beta subunits. Highly sensitive to both iberiotoxin (IbTx) and charybdotoxin (CTX). In Macaca mulatta (Rhesus macaque), this protein is Calcium-activated potassium channel subunit alpha-1 (KCNMA1).